Reading from the N-terminus, the 384-residue chain is MAP kinase-activated protein kinase 3 (384 aa).

Met1 is subject to N-acetylmethionine. The interval Met1–Pro22 is disordered. Positions Gln46–Ile306 constitute a Protein kinase domain. ATP contacts are provided by residues Leu52–Val60 and Lys75. The active-site Proton acceptor is the Asp168. A Phosphothreonine; by MAPK14 modification is found at Thr203. Ser253 bears the Phosphoserine; by MAPK14 mark. Position 309 is a phosphoserine; by autocatalysis (Ser309). The interval Ser309–Arg345 is autoinhibitory helix. Thr315 bears the Phosphothreonine; by MAPK14 mark. Residues Met337 to Val346 carry the Nuclear export signal (NES) motif. Residues Asp347 to Gln371 form a p38 MAPK-binding site region. 2 short sequence motifs (bipartite nuclear localization signal) span residues Lys352–Asp355 and Lys366–Lys370. The segment at Ser359–Gln384 is disordered. The span at Gly373–Gln384 shows a compositional bias: low complexity.

This sequence belongs to the protein kinase superfamily. CAMK Ser/Thr protein kinase family. As to quaternary structure, heterodimer with p38-alpha/MAPK14. The heterodimer with p38-alpha/MAPK14 forms a stable complex: molecules are positioned 'face to face' so that the ATP-binding sites of both kinases are at the heterodimer interface. Interacts with TCF3 and with polycomb proteins, such as PCH2 and BMI1/PCGF4. Phosphorylated and activated by MAPK1/ERK2 and MAPK3/ERK1. Phosphorylated and activated by MAP kinase p38-alpha/MAPK14 at Thr-203, Ser-253 and Thr-315.

The protein localises to the nucleus. It localises to the cytoplasm. The enzyme catalyses L-seryl-[protein] + ATP = O-phospho-L-seryl-[protein] + ADP + H(+). It catalyses the reaction L-threonyl-[protein] + ATP = O-phospho-L-threonyl-[protein] + ADP + H(+). Its activity is regulated as follows. Activated following phosphorylation by p38-alpha/MAPK14 following various stresses. Inhibited by ligand 5B (2'-[2-(1,3-benzodioxol-5-yl)pyrimidin-4-yl]-5',6'-dihydrospiro[piperidine-4,7'-pyrrolo[3,2-c]pyridin]- 4'(1'h)-one) and ligand P4O (2-[2-(2-fluorophenyl)pyridin-4-yl]-1,5,6,7-tetrahydro- 4h-pyrrolo[3,2-c]pyridin-4-one), 2 ATP-competitive inhibitors. In terms of biological role, stress-activated serine/threonine-protein kinase involved in cytokines production, endocytosis, cell migration, chromatin remodeling and transcriptional regulation. Following stress, it is phosphorylated and activated by MAP kinase p38-alpha/MAPK14, leading to phosphorylation of substrates. Phosphorylates serine in the peptide sequence, Hyd-X-R-X(2)-S, where Hyd is a large hydrophobic residue. MAPKAPK2 and MAPKAPK3, share the same function and substrate specificity, but MAPKAPK3 kinase activity and level in protein expression are lower compared to MAPKAPK2. Phosphorylates HSP27/HSPB1, KRT18, KRT20, RCSD1, RPS6KA3, TAB3 and TTP/ZFP36. Mediates phosphorylation of HSP27/HSPB1 in response to stress, leading to dissociate HSP27/HSPB1 from large small heat-shock protein (sHsps) oligomers and impair their chaperone activities and ability to protect against oxidative stress effectively. Involved in inflammatory response by regulating tumor necrosis factor (TNF) and IL6 production post-transcriptionally: acts by phosphorylating AU-rich elements (AREs)-binding proteins, such as TTP/ZFP36, leading to regulate the stability and translation of TNF and IL6 mRNAs. Phosphorylation of TTP/ZFP36, a major post-transcriptional regulator of TNF, promotes its binding to 14-3-3 proteins and reduces its ARE mRNA affinity leading to inhibition of dependent degradation of ARE-containing transcript. Involved in toll-like receptor signaling pathway (TLR) in dendritic cells: required for acute TLR-induced macropinocytosis by phosphorylating and activating RPS6KA3. Also acts as a modulator of Polycomb-mediated repression. In Bos taurus (Bovine), this protein is MAP kinase-activated protein kinase 3 (MAPKAPK3).